Here is a 509-residue protein sequence, read N- to C-terminus: Aspartyl/glutamyl-tRNA(Asn/Gln) amidotransferase subunit B (509 aa).

The protein belongs to the GatB/GatE family. GatB subfamily. Heterotrimer of A, B and C subunits.

It catalyses the reaction L-glutamyl-tRNA(Gln) + L-glutamine + ATP + H2O = L-glutaminyl-tRNA(Gln) + L-glutamate + ADP + phosphate + H(+). The catalysed reaction is L-aspartyl-tRNA(Asn) + L-glutamine + ATP + H2O = L-asparaginyl-tRNA(Asn) + L-glutamate + ADP + phosphate + 2 H(+). Allows the formation of correctly charged Asn-tRNA(Asn) or Gln-tRNA(Gln) through the transamidation of misacylated Asp-tRNA(Asn) or Glu-tRNA(Gln) in organisms which lack either or both of asparaginyl-tRNA or glutaminyl-tRNA synthetases. The reaction takes place in the presence of glutamine and ATP through an activated phospho-Asp-tRNA(Asn) or phospho-Glu-tRNA(Gln). This Mycobacterium leprae (strain Br4923) protein is Aspartyl/glutamyl-tRNA(Asn/Gln) amidotransferase subunit B.